A 260-amino-acid chain; its full sequence is Acyl-coenzyme A diphosphatase FITM2 (260 aa).

Topologically, residues 1 to 23 are cytoplasmic; the sequence is MERLENCAQMFQRRFLNESFRRH. A helical transmembrane segment spans residues 24 to 44; sequence CPVLLACIVLGGSLLKELCPL. Over 45–57 the chain is Lumenal; it reads PDSYWNNKRNVLN. The chain crosses the membrane as a helical span at residues 58–78; it reads VYFVKFSWGWTLWLLLPFIAL. At 79–93 the chain is on the cytoplasmic side; it reads TNYKLTRSTTKVLRR. Residues 94 to 114 form a helical membrane-spanning segment; that stretch reads LSSLLVSTLIWYLCTNLFLYI. At 115-145 the chain is on the lumenal side; it reads ENITGSCYESEAMSDPKEHQDRRECRLHSGY. A helical transmembrane segment spans residues 146–166; it reads WHGFDISGHCFLLSYCILLIL. Histidine 154 is a catalytic residue. Residues 167-189 lie on the Cytoplasmic side of the membrane; the sequence is EETSIISNIRFERHWHRMAINAQ. The next 2 membrane-spanning stretches (helical) occupy residues 190–210 and 211–231; these read FAAL…TAVY and FHNI…WYIT. Histidine 212 is an active-site residue. Over 232–260 the chain is Cytoplasmic; sequence YRWWYLQPISPGLPPASASRSGKEPIYRN.

Belongs to the FIT family. FIT2 subfamily.

It localises to the endoplasmic reticulum membrane. The catalysed reaction is an acyl-CoA + H2O = an acyl-4'-phosphopantetheine + adenosine 3',5'-bisphosphate + 2 H(+). Fatty acyl-coenzyme A (CoA) diphosphatase that hydrolyzes fatty acyl-CoA to yield acyl-4'-phosphopantetheine and adenosine 3',5'-bisphosphate. Preferentially hydrolyzes unsaturated long-chain acyl-CoA substrates in the endoplasmic reticulum (ER) lumen. This catalytic activity is required for maintaining ER structure and for lipid droplets (LDs) biogenesis, which are lipid storage organelles involved in maintaining lipid and energy homeostasis. May directly bind to diacylglycerol (DAGs) and triacylglycerol, which is also important for LD biogenesis. May support directional budding of nacent LDs from the ER into the cytosol by reducing DAG levels at sites of LD formation. May play a role in the regulation of cell morphology, ER morphology and cytoskeletal organization. The polypeptide is Acyl-coenzyme A diphosphatase FITM2 (Xenopus tropicalis (Western clawed frog)).